We begin with the raw amino-acid sequence, 176 residues long: Translation initiation factor IF-3 (176 aa).

The protein belongs to the IF-3 family. In terms of assembly, monomer.

It is found in the cytoplasm. Functionally, IF-3 binds to the 30S ribosomal subunit and shifts the equilibrium between 70S ribosomes and their 50S and 30S subunits in favor of the free subunits, thus enhancing the availability of 30S subunits on which protein synthesis initiation begins. The chain is Translation initiation factor IF-3 from Streptococcus thermophilus (strain ATCC BAA-491 / LMD-9).